An 89-amino-acid chain; its full sequence is Small ribosomal subunit protein uS15 (89 aa).

The protein belongs to the universal ribosomal protein uS15 family. As to quaternary structure, part of the 30S ribosomal subunit. Forms a bridge to the 50S subunit in the 70S ribosome, contacting the 23S rRNA.

Functionally, one of the primary rRNA binding proteins, it binds directly to 16S rRNA where it helps nucleate assembly of the platform of the 30S subunit by binding and bridging several RNA helices of the 16S rRNA. Its function is as follows. Forms an intersubunit bridge (bridge B4) with the 23S rRNA of the 50S subunit in the ribosome. This chain is Small ribosomal subunit protein uS15, found in Roseiflexus sp. (strain RS-1).